Reading from the N-terminus, the 385-residue chain is 8-amino-7-oxononanoate synthase (385 aa).

Arginine 21 provides a ligand contact to substrate. Residue glycine 108–phenylalanine 109 participates in pyridoxal 5'-phosphate binding. Histidine 133 contributes to the substrate binding site. Residues serine 179, histidine 207, and threonine 233 each coordinate pyridoxal 5'-phosphate. At lysine 236 the chain carries N6-(pyridoxal phosphate)lysine. Threonine 352 is a binding site for substrate.

This sequence belongs to the class-II pyridoxal-phosphate-dependent aminotransferase family. BioF subfamily. In terms of assembly, homodimer. Pyridoxal 5'-phosphate serves as cofactor.

It carries out the reaction 6-carboxyhexanoyl-[ACP] + L-alanine + H(+) = (8S)-8-amino-7-oxononanoate + holo-[ACP] + CO2. It functions in the pathway cofactor biosynthesis; biotin biosynthesis. Functionally, catalyzes the decarboxylative condensation of pimeloyl-[acyl-carrier protein] and L-alanine to produce 8-amino-7-oxononanoate (AON), [acyl-carrier protein], and carbon dioxide. In Salmonella dublin (strain CT_02021853), this protein is 8-amino-7-oxononanoate synthase.